The following is a 324-amino-acid chain: Lactonase drp35 (324 aa).

Residues Glu47, Ser109, Gly111, Asp129, Thr132, Tyr134, Asp137, Asn184, Asp235, and Ser236 each contribute to the Ca(2+) site. The active-site Proton donor is Asp235.

It belongs to the SMP-30/CGR1 family. Requires Ca(2+) as cofactor.

The protein localises to the cytoplasm. Functionally, exhibits lactonase activity. Acts in cells with perturbed membrane integrity and is possibly related to the membrane homeostasis. This Staphylococcus aureus (strain MRSA252) protein is Lactonase drp35 (drp35).